Consider the following 178-residue polypeptide: Ribosome maturation factor RimM (178 aa).

The region spanning 94–174 (KNEFFWFDLI…RIDVINSFDI (81 aa)) is the PRC barrel domain.

This sequence belongs to the RimM family. As to quaternary structure, binds ribosomal protein uS19.

The protein localises to the cytoplasm. An accessory protein needed during the final step in the assembly of 30S ribosomal subunit, possibly for assembly of the head region. Essential for efficient processing of 16S rRNA. May be needed both before and after RbfA during the maturation of 16S rRNA. It has affinity for free ribosomal 30S subunits but not for 70S ribosomes. This Aliarcobacter butzleri (strain RM4018) (Arcobacter butzleri) protein is Ribosome maturation factor RimM.